The sequence spans 395 residues: GPI-anchor transamidase (395 aa).

The N-terminal stretch at 1–27 (MAAPCFLTLRVATLAALALLSLGSSAA) is a signal peptide. Residues 28 to 368 (GHIEDQAEQF…PKPRDWHPPG (341 aa)) lie on the Lumenal side of the membrane. Ca(2+) is bound by residues Asp79, Ile82, Glu118, and Asp120. The Proton donor role is filled by His164. Cys206 serves as the catalytic Nucleophile; acyl-thioester intermediate. The a protein site is built by Cys206, Ser232, and Ser234. The segment at 231 to 236 (DSLSHQ) is autoinhibitory loop. Cys275 and Cys280 are joined by a disulfide. Residues 369 to 385 (GFILGLWALIIMVFFKT) form a helical membrane-spanning segment. At 386-395 (YGIKHMKFIF) the chain is on the cytoplasmic side.

Belongs to the peptidase C13 family. Heteropentamer. Part of the GPI-anchor transamidase complex, consisting of PIGK, PIGT, PIGS, PIGU and GAA1. Interacts with GPAA1. Interacts with PIGT; this interaction, via a disulfide link, stabilizes the expression of GAA1 and PIGK and links them to PIGS. Post-translationally, the disulfide bond between PIGK/GPI8 and PIGT is important for normal enzyme activity.

It is found in the endoplasmic reticulum membrane. It functions in the pathway glycolipid biosynthesis; glycosylphosphatidylinositol-anchor biosynthesis. With respect to regulation, in the absence of proproteins substrates, exists in an inactive state with a disrupted catalytic site by an autoinhibitory loop. The binding of proprotein substrates, particularly the CSP region, to GPI-T triggers concerted conformational changes that alleviate the inhibition by the autoinhibitory loop. Meanwhile, proprotein residues near the omega- site induce the formation of a catalytic cleft for catalysis, following which the products are released and GPI-T reverts to the inactive state. In terms of biological role, catalytic subunit of the glycosylphosphatidylinositol-anchor (GPI-anchor) transamidase (GPI-T) complex that catalyzes the formation of the linkage between a proprotein and a GPI-anchor and participates in GPI anchored protein biosynthesis. Recognizes diverse proproteins at a C-terminal signal peptide (CSP) region that lacks consensus sequence and replaces it with a GPI-anchor via a transamidation reaction. Transamidation catalysis reaction follows a two-phase mechanism. In the acyl-enzyme phase, the carbonyl group of the proproteins's omega-site undergoes a nucleophilic attack forming an enzyme-substrate thioester bond. Followed by a general acid catalysis that allows CSP releasing, regenerating the carbonyl, and forming the acyl-enzyme intermediate. In the GPI-anchor attachment phase, the amino group of the GPI-anchor's ethanolamine phosphate, the one on third mannose (EtNP3), mediates a nucleophilic attack on the carbonyl of the acyl-enzyme intermediate, replacing the CSP, allowing GPI-anchor attachment to the omega-residue, therefore forming the product and freeing the enzyme. This is GPI-anchor transamidase from Mus musculus (Mouse).